The chain runs to 138 residues: Putative pre-16S rRNA nuclease (138 aa).

Belongs to the YqgF nuclease family.

The protein resides in the cytoplasm. Its function is as follows. Could be a nuclease involved in processing of the 5'-end of pre-16S rRNA. This is Putative pre-16S rRNA nuclease from Polaromonas sp. (strain JS666 / ATCC BAA-500).